The chain runs to 165 residues: Crossover junction endodeoxyribonuclease RuvC (165 aa).

Catalysis depends on residues Asp-7, Glu-67, and Asp-140. The Mg(2+) site is built by Asp-7, Glu-67, and Asp-140.

It belongs to the RuvC family. As to quaternary structure, homodimer which binds Holliday junction (HJ) DNA. The HJ becomes 2-fold symmetrical on binding to RuvC with unstacked arms; it has a different conformation from HJ DNA in complex with RuvA. In the full resolvosome a probable DNA-RuvA(4)-RuvB(12)-RuvC(2) complex forms which resolves the HJ. It depends on Mg(2+) as a cofactor.

The protein localises to the cytoplasm. The catalysed reaction is Endonucleolytic cleavage at a junction such as a reciprocal single-stranded crossover between two homologous DNA duplexes (Holliday junction).. Its function is as follows. The RuvA-RuvB-RuvC complex processes Holliday junction (HJ) DNA during genetic recombination and DNA repair. Endonuclease that resolves HJ intermediates. Cleaves cruciform DNA by making single-stranded nicks across the HJ at symmetrical positions within the homologous arms, yielding a 5'-phosphate and a 3'-hydroxyl group; requires a central core of homology in the junction. The consensus cleavage sequence is 5'-(A/T)TT(C/G)-3'. Cleavage occurs on the 3'-side of the TT dinucleotide at the point of strand exchange. HJ branch migration catalyzed by RuvA-RuvB allows RuvC to scan DNA until it finds its consensus sequence, where it cleaves and resolves the cruciform DNA. The chain is Crossover junction endodeoxyribonuclease RuvC from Dehalococcoides mccartyi (strain ATCC BAA-2266 / KCTC 15142 / 195) (Dehalococcoides ethenogenes (strain 195)).